A 340-amino-acid chain; its full sequence is Hyaluronan and proteoglycan link protein 2 (340 aa).

An N-terminal signal peptide occupies residues 1 to 26; it reads MPGWLTLPTLCRFLLWAFTIFHKAQG. The region spanning 34 to 144 is the Ig-like V-type domain; sequence PHYLLPPIHE…EDESVALTLS (111 aa). 5 disulfide bridges follow: Cys57–Cys128, Cys170–Cys240, Cys194–Cys215, Cys265–Cys336, and Cys290–Cys311. Link domains lie at 148–242 and 245–338; these read VVFP…FCFT and LAGQ…YCYA.

This sequence belongs to the HAPLN family. As to expression, expressed only in adult brain.

The protein resides in the secreted. It is found in the extracellular space. The protein localises to the extracellular matrix. Its function is as follows. Mediates a firm binding of versican V2 to hyaluronic acid. May play a pivotal role in the formation of the hyaluronan-associated matrix in the central nervous system (CNS) which facilitates neuronal conduction and general structural stabilization. Binds to hyaluronic acid. This chain is Hyaluronan and proteoglycan link protein 2 (HAPLN2), found in Homo sapiens (Human).